Consider the following 335-residue polypeptide: MNLLVTGAAGFIGSRYVHHLLEATRRGREPAPVITVLDKLTYAGVLGNVPDDPAVTFVRGDIADAPLVDSLMAEADQVVHFAAETHVDRSITSPGTFVRTNVLGTQVLLDAALRHGVGPFVHVSTDEVYGSIEHGSWPEHQPLCPNSPYSASKASSDLLALSYHRTHGLDVRVTRCSNNYGPHQFPEKIVPLFVTNLLDGLRVPLYGDGLNVREWLHVDDHCLGVDLVRTQGRPGEVYHIGGGTELTNRDLTGLLLDAFGVGWDVVDPVADRKGHDRRYALDCAKAADELGYRPRRDFAEGIARTIDWYRDNRAWWEPLKKRPAGPAAPPRGSGP.

Residues 11–12, 38–41, 61–62, 81–85, and Thr-100 contribute to the NAD(+) site; these read FI, DKLT, DI, and FAAET. Thr-85 contacts substrate. Thr-125 serves as a coordination point for substrate. Asp-126 serves as the catalytic Proton donor. Active-site proton acceptor residues include Glu-127 and Tyr-149. 149–153 contacts NAD(+); sequence YSASK. Residue Asn-178 participates in substrate binding. Residue Asn-179 coordinates NAD(+). Substrate contacts are provided by residues 188–189, 204–206, Arg-213, Asn-248, and 271–275; these read KI, PLY, and DRKGH.

It belongs to the NAD(P)-dependent epimerase/dehydratase family. dTDP-glucose dehydratase subfamily. The cofactor is NAD(+).

The enzyme catalyses dTDP-alpha-D-glucose = dTDP-4-dehydro-6-deoxy-alpha-D-glucose + H2O. Its pathway is antibiotic biosynthesis. Its function is as follows. Involved in the biosynthesis of the two 2,6-deoxysugars, dTDP-L-oleandrose and dTDP-D-desosamine, attached to the macrolactone ring oleandolide to produce the aglycone antibiotic oleandomycin. Catalyzes the dehydration of dTDP-D-glucose to form dTDP-6-deoxy-D-xylo-4-hexulose via a three-step process involving oxidation, dehydration and reduction. The sequence is that of dTDP-glucose 4,6-dehydratase from Streptomyces antibioticus.